A 579-amino-acid chain; its full sequence is General transcription and DNA repair factor IIH subunit TFB1-3 (579 aa).

BSD domains follow at residues 107 to 161 (LTPA…GKDS) and 186 to 238 (RTNR…YLYS).

Belongs to the TFB1 family. As to quaternary structure, component of the 7-subunit TFIIH core complex composed of XPB, XPD, TFB1/GTF2H1, GTF2H2/P44, TFB4/GTF2H3, TFB2/GTF2H4 and TFB5/GTF2H5, which is active in NER. The core complex associates with the 3-subunit CDK-activating kinase (CAK) module composed of CYCH1/cyclin H1, CDKD and MAT1/At4g30820 to form the 10-subunit holoenzyme (holo-TFIIH) active in transcription.

The protein resides in the nucleus. In terms of biological role, component of the general transcription and DNA repair factor IIH (TFIIH) core complex, which is involved in general and transcription-coupled nucleotide excision repair (NER) of damaged DNA and, when complexed to CAK, in RNA transcription by RNA polymerase II. In NER, TFIIH acts by opening DNA around the lesion to allow the excision of the damaged oligonucleotide and its replacement by a new DNA fragment. In transcription, TFIIH has an essential role in transcription initiation. When the pre-initiation complex (PIC) has been established, TFIIH is required for promoter opening and promoter escape. Phosphorylation of the C-terminal tail (CTD) of the largest subunit of RNA polymerase II by the kinase module CAK controls the initiation of transcription. The polypeptide is General transcription and DNA repair factor IIH subunit TFB1-3 (Arabidopsis thaliana (Mouse-ear cress)).